Here is a 1236-residue protein sequence, read N- to C-terminus: DNA-directed RNA polymerase subunit beta (1236 aa).

The tract at residues 1185–1236 (IEGSEDYTEPKQPNDNYLEEEENKDKESDYDEDLNFDDLTKGLQLDDFNDEH) is disordered. The span at 1201–1220 (YLEEEENKDKESDYDEDLNF) shows a compositional bias: acidic residues.

The protein belongs to the RNA polymerase beta chain family. As to quaternary structure, the RNAP catalytic core consists of 2 alpha, 1 beta, 1 beta' and 1 omega subunit. When a sigma factor is associated with the core the holoenzyme is formed, which can initiate transcription.

It catalyses the reaction RNA(n) + a ribonucleoside 5'-triphosphate = RNA(n+1) + diphosphate. Its function is as follows. DNA-dependent RNA polymerase catalyzes the transcription of DNA into RNA using the four ribonucleoside triphosphates as substrates. The protein is DNA-directed RNA polymerase subunit beta of Clostridium tetani (strain Massachusetts / E88).